The primary structure comprises 93 residues: UPF0058 protein AF_0738 (93 aa).

This sequence belongs to the UPF0058 family.

The polypeptide is UPF0058 protein AF_0738 (Archaeoglobus fulgidus (strain ATCC 49558 / DSM 4304 / JCM 9628 / NBRC 100126 / VC-16)).